The primary structure comprises 432 residues: Queuine tRNA-ribosyltransferase accessory subunit 2 (432 aa).

Zn(2+) contacts are provided by C329, C331, C334, and H360. Residues 390 to 432 (GQKSLPPYEPPKEEKLPMPAAQKAELMEPMEDLGEKQNKKQRA) are disordered. A compositionally biased stretch (basic and acidic residues) spans 422–432 (LGEKQNKKQRA).

It belongs to the queuine tRNA-ribosyltransferase family. QTRT2 subfamily. As to quaternary structure, heterodimer of a catalytic subunit and an accessory subunit. Zn(2+) is required as a cofactor.

Its subcellular location is the cytoplasm. Its function is as follows. Non-catalytic subunit of the queuine tRNA-ribosyltransferase (TGT) that catalyzes the base-exchange of a guanine (G) residue with queuine (Q) at position 34 (anticodon wobble position) in tRNAs with GU(N) anticodons (tRNA-Asp, -Asn, -His and -Tyr), resulting in the hypermodified nucleoside queuosine (7-(((4,5-cis-dihydroxy-2-cyclopenten-1-yl)amino)methyl)-7-deazaguanosine). The protein is Queuine tRNA-ribosyltransferase accessory subunit 2 of Anopheles gambiae (African malaria mosquito).